A 393-amino-acid chain; its full sequence is Probable galacturonosyltransferase-like 8 (393 aa).

At 1 to 4 the chain is on the cytoplasmic side; it reads MSSR. A helical; Signal-anchor for type II membrane protein membrane pass occupies residues 5-25; it reads FSLTVVCLIALLPFVVGIRLI. Over 26–393 the chain is Lumenal; sequence PARITSVGDG…SELTDDSSFL (368 aa). N-linked (GlcNAc...) asparagine glycosylation is present at N226.

The protein belongs to the glycosyltransferase 8 family.

Its subcellular location is the golgi apparatus membrane. Its pathway is glycan metabolism; pectin biosynthesis. May be involved in pectin and/or xylans biosynthesis in cell walls. The chain is Probable galacturonosyltransferase-like 8 (GATL8) from Arabidopsis thaliana (Mouse-ear cress).